The sequence spans 596 residues: Beta-fructofuranosidase, insoluble isoenzyme 6 (596 aa).

The first 25 residues, 1–25 (MALAGLPLSVFAIAVHFCLVFSSSS), serve as a signal peptide directing secretion. Substrate contacts are provided by residues 49 to 52 (WQND), Q68, and W76. Residue D52 is part of the active site. N-linked (GlcNAc...) asparagine glycosylation occurs at N80. Residues 113–114 (AS), 177–178 (RD), and E232 contribute to the substrate site. Residue N335 is glycosylated (N-linked (GlcNAc...) asparagine). C436 and C482 are disulfide-bonded. N-linked (GlcNAc...) asparagine glycosylation is present at N556.

It belongs to the glycosyl hydrolase 32 family. Expressed in roots. Weakly expressed in flowers.

The protein localises to the secreted. Its subcellular location is the extracellular space. It is found in the apoplast. It localises to the cell wall. It carries out the reaction Hydrolysis of terminal non-reducing beta-D-fructofuranoside residues in beta-D-fructofuranosides.. In Oryza sativa subsp. japonica (Rice), this protein is Beta-fructofuranosidase, insoluble isoenzyme 6 (CIN6).